We begin with the raw amino-acid sequence, 102 residues long: MDNQNIRIRLKAYDHRVLDNSTKEIVNTAKRTGARVRGPIPLPTHIERFTVNRSPHVDKKSREQFEIRTHRRLLDIVEPTPQTVDALMKLDLAAGVDVEIKL.

Belongs to the universal ribosomal protein uS10 family. In terms of assembly, part of the 30S ribosomal subunit.

In terms of biological role, involved in the binding of tRNA to the ribosomes. This Gluconobacter oxydans (strain 621H) (Gluconobacter suboxydans) protein is Small ribosomal subunit protein uS10.